The sequence spans 428 residues: Serine--tRNA ligase (428 aa).

Residue 231–233 (TAE) participates in L-serine binding. ATP-binding positions include 262-264 (RRE) and V278. E285 contacts L-serine. Residue 349-352 (EVSS) coordinates ATP. S384 contacts L-serine.

The protein belongs to the class-II aminoacyl-tRNA synthetase family. Type-1 seryl-tRNA synthetase subfamily. Homodimer. The tRNA molecule binds across the dimer.

It localises to the cytoplasm. It carries out the reaction tRNA(Ser) + L-serine + ATP = L-seryl-tRNA(Ser) + AMP + diphosphate + H(+). It catalyses the reaction tRNA(Sec) + L-serine + ATP = L-seryl-tRNA(Sec) + AMP + diphosphate + H(+). Its pathway is aminoacyl-tRNA biosynthesis; selenocysteinyl-tRNA(Sec) biosynthesis; L-seryl-tRNA(Sec) from L-serine and tRNA(Sec): step 1/1. Its function is as follows. Catalyzes the attachment of serine to tRNA(Ser). Is also able to aminoacylate tRNA(Sec) with serine, to form the misacylated tRNA L-seryl-tRNA(Sec), which will be further converted into selenocysteinyl-tRNA(Sec). The sequence is that of Serine--tRNA ligase from Chlamydia muridarum (strain MoPn / Nigg).